A 401-amino-acid chain; its full sequence is Propionate kinase (401 aa).

Residues N11 and K18 each coordinate ATP. N11 contributes to the Mg(2+) binding site. Residue R86 coordinates substrate. The active-site Proton donor/acceptor is D143. ATP is bound by residues H175, 203–207 (HLGNG), 278–280 (DLR), and 326–330 (GIGEN).

This sequence belongs to the acetokinase family. TdcD subfamily. As to quaternary structure, homodimer. It depends on Mg(2+) as a cofactor.

The enzyme catalyses propanoate + ATP = propanoyl phosphate + ADP. The protein operates within amino-acid degradation; L-threonine degradation via propanoate pathway; propanoate from L-threonine: step 4/4. Catalyzes the conversion of propionyl phosphate and ADP to propionate and ATP. This is Propionate kinase from Klebsiella pneumoniae (strain 342).